Reading from the N-terminus, the 116-residue chain is Ribosome-binding factor A (116 aa).

It belongs to the RbfA family. Monomer. Binds 30S ribosomal subunits, but not 50S ribosomal subunits or 70S ribosomes.

It localises to the cytoplasm. In terms of biological role, one of several proteins that assist in the late maturation steps of the functional core of the 30S ribosomal subunit. Associates with free 30S ribosomal subunits (but not with 30S subunits that are part of 70S ribosomes or polysomes). Required for efficient processing of 16S rRNA. May interact with the 5'-terminal helix region of 16S rRNA. This Streptococcus agalactiae protein is Ribosome-binding factor A.